Here is a 516-residue protein sequence, read N- to C-terminus: (R)-citramalate synthase CimA (516 aa).

In terms of domain architecture, Pyruvate carboxyltransferase spans 8 to 269 (LEILDVTLRD…KTNINEIAIT (262 aa)). Residue Arg16 is the Proton donor of the active site. Pyruvate contacts are provided by residues 16–17 (RD) and Tyr144. Asp17 is a Mn(2+) binding site. Glu146 serves as the catalytic Proton acceptor. Residue Thr179 coordinates pyruvate. 2 residues coordinate Mn(2+): His207 and His209.

It belongs to the alpha-IPM synthase/homocitrate synthase family. As to quaternary structure, homodimer. Mn(2+) is required as a cofactor.

It carries out the reaction pyruvate + acetyl-CoA + H2O = (3R)-citramalate + CoA + H(+). The protein operates within amino-acid biosynthesis; L-isoleucine biosynthesis; 2-oxobutanoate from pyruvate: step 1/3. With respect to regulation, regulated by the end-product isoleucine via a feedback inhibition. The binding of isoleucine has inhibitory effects on the binding of both pyruvate and acetyl-CoA. May act via conformational change of the dimer interface of the regulatory domain, leading to inhibition of the catalytic reaction. Catalyzes the condensation of pyruvate and acetyl-coenzyme A to form (R)-citramalate. Shows strict substrate specificity for pyruvate. Cannot use alpha-ketoisovalerate, alpha-ketobutyrate, alpha-ketoisocaproate, alpha-ketoglutarate or glyoxylate. This chain is (R)-citramalate synthase CimA, found in Leptospira interrogans serogroup Icterohaemorrhagiae serovar Lai (strain 56601).